The primary structure comprises 127 residues: Aspartate 1-decarboxylase (127 aa).

The active-site Schiff-base intermediate with substrate; via pyruvic acid is Ser-25. Ser-25 carries the post-translational modification Pyruvic acid (Ser). Substrate is bound at residue Thr-57. Tyr-58 (proton donor) is an active-site residue. 73 to 75 contacts substrate; sequence GAA.

Belongs to the PanD family. As to quaternary structure, heterooctamer of four alpha and four beta subunits. The cofactor is pyruvate. Post-translationally, is synthesized initially as an inactive proenzyme, which is activated by self-cleavage at a specific serine bond to produce a beta-subunit with a hydroxyl group at its C-terminus and an alpha-subunit with a pyruvoyl group at its N-terminus.

Its subcellular location is the cytoplasm. The catalysed reaction is L-aspartate + H(+) = beta-alanine + CO2. It participates in cofactor biosynthesis; (R)-pantothenate biosynthesis; beta-alanine from L-aspartate: step 1/1. Its function is as follows. Catalyzes the pyruvoyl-dependent decarboxylation of aspartate to produce beta-alanine. This is Aspartate 1-decarboxylase from Neisseria gonorrhoeae (strain ATCC 700825 / FA 1090).